A 643-amino-acid chain; its full sequence is uncharacterized protein (643 aa).

The helical transmembrane segment at 9 to 29 (IVLALLLLLLPVVCGDVSVYK) threads the bilayer.

It localises to the membrane. This is an uncharacterized protein from Methanocaldococcus jannaschii (strain ATCC 43067 / DSM 2661 / JAL-1 / JCM 10045 / NBRC 100440) (Methanococcus jannaschii).